Consider the following 158-residue polypeptide: NAD(P)H-quinone oxidoreductase subunit J, chloroplastic (158 aa).

The protein belongs to the complex I 30 kDa subunit family. In terms of assembly, NDH is composed of at least 16 different subunits, 5 of which are encoded in the nucleus.

Its subcellular location is the plastid. The protein resides in the chloroplast thylakoid membrane. The catalysed reaction is a plastoquinone + NADH + (n+1) H(+)(in) = a plastoquinol + NAD(+) + n H(+)(out). The enzyme catalyses a plastoquinone + NADPH + (n+1) H(+)(in) = a plastoquinol + NADP(+) + n H(+)(out). In terms of biological role, NDH shuttles electrons from NAD(P)H:plastoquinone, via FMN and iron-sulfur (Fe-S) centers, to quinones in the photosynthetic chain and possibly in a chloroplast respiratory chain. The immediate electron acceptor for the enzyme in this species is believed to be plastoquinone. Couples the redox reaction to proton translocation, and thus conserves the redox energy in a proton gradient. In Nasturtium officinale (Watercress), this protein is NAD(P)H-quinone oxidoreductase subunit J, chloroplastic.